The following is a 119-amino-acid chain: Large ribosomal subunit protein bL20 (119 aa).

This sequence belongs to the bacterial ribosomal protein bL20 family.

Binds directly to 23S ribosomal RNA and is necessary for the in vitro assembly process of the 50S ribosomal subunit. It is not involved in the protein synthesizing functions of that subunit. The sequence is that of Large ribosomal subunit protein bL20 from Bradyrhizobium sp. (strain BTAi1 / ATCC BAA-1182).